The following is a 90-amino-acid chain: MARVTVQDAVEKVGNRFDLILTAARRARELQLHKREPLVPEDNDKPTVIALREIEKGLINNDIMNAHERREALEQETAELNTISLLYQNN.

Belongs to the RNA polymerase subunit omega family. In terms of assembly, the RNAP catalytic core consists of 2 alpha, 1 beta, 1 beta' and 1 omega subunit. When a sigma factor is associated with the core the holoenzyme is formed, which can initiate transcription.

The enzyme catalyses RNA(n) + a ribonucleoside 5'-triphosphate = RNA(n+1) + diphosphate. Promotes RNA polymerase assembly. Latches the N- and C-terminal regions of the beta' subunit thereby facilitating its interaction with the beta and alpha subunits. The protein is DNA-directed RNA polymerase subunit omega of Histophilus somni (strain 129Pt) (Haemophilus somnus).